The primary structure comprises 66 residues: MPKMKTHRGSAKRFKKTASGKLKRGHAYTSHLFANKTKKQKRHLRKAALVSPGDFKRIRQMLDNLK.

A compositionally biased stretch (basic residues) spans 1–26 (MPKMKTHRGSAKRFKKTASGKLKRGH). Residues 1-28 (MPKMKTHRGSAKRFKKTASGKLKRGHAY) form a disordered region.

This sequence belongs to the bacterial ribosomal protein bL35 family.

The polypeptide is Large ribosomal subunit protein bL35 (Geobacillus thermodenitrificans (strain NG80-2)).